Here is a 971-residue protein sequence, read N- to C-terminus: Outer capsid protein VP2 (971 aa).

It belongs to the orbivirus VP2 family.

It is found in the virion. The VP2 protein is one of the two proteins (with VP5) which constitute the virus particle outer capsid. It is the major target of the host immunogenic response. The chain is Outer capsid protein VP2 (Segment-2) from Epizootic hemorrhagic disease virus 1 (EHDV-1).